A 298-amino-acid polypeptide reads, in one-letter code: Proton-activated chloride channel (298 aa).

Topologically, residues 1 to 12 (MPIGFNKACLKN) are cytoplasmic. The helical transmembrane segment at 13–33 (VFTVILVLIYLALTAVAVFLA) threads the bilayer. Residues 34 to 245 (YQTISDFMDK…RDPFIQQVKD (212 aa)) are Extracellular-facing. The chain crosses the membrane as a helical span at residues 246-266 (IVTANPWNTIAILCGVFMALF). The Cytoplasmic portion of the chain corresponds to 267–298 (KAADFAKLSIKWMIRIRKRHIRAKMREMNQIS).

Belongs to the proton-activated chloride channel family.

It is found in the cell membrane. The enzyme catalyses chloride(in) = chloride(out). Chloride channel gated by pH that facilitates the entry of chloride ions into cells upon exposure to extracellular acidic pH. Displays channel activity with distinct kinetic properties compared to the human ortholog channel. This is Proton-activated chloride channel from Danio rerio (Zebrafish).